The following is a 379-amino-acid chain: 1-deoxy-D-xylulose 5-phosphate reductoisomerase (379 aa).

NADPH contacts are provided by Thr-10, Gly-11, Ser-12, Ile-13, Asn-39, and Asn-121. Residue Lys-122 coordinates 1-deoxy-D-xylulose 5-phosphate. Glu-123 is a binding site for NADPH. Mn(2+) is bound at residue Asp-147. 4 residues coordinate 1-deoxy-D-xylulose 5-phosphate: Ser-148, Glu-149, Ser-173, and His-196. A Mn(2+)-binding site is contributed by Glu-149. Gly-202 contacts NADPH. 4 residues coordinate 1-deoxy-D-xylulose 5-phosphate: Ser-209, Asn-214, Lys-215, and Glu-218. Residue Glu-218 participates in Mn(2+) binding.

Belongs to the DXR family. The cofactor is Mg(2+). Mn(2+) is required as a cofactor.

It carries out the reaction 2-C-methyl-D-erythritol 4-phosphate + NADP(+) = 1-deoxy-D-xylulose 5-phosphate + NADPH + H(+). The protein operates within isoprenoid biosynthesis; isopentenyl diphosphate biosynthesis via DXP pathway; isopentenyl diphosphate from 1-deoxy-D-xylulose 5-phosphate: step 1/6. Its function is as follows. Catalyzes the NADPH-dependent rearrangement and reduction of 1-deoxy-D-xylulose-5-phosphate (DXP) to 2-C-methyl-D-erythritol 4-phosphate (MEP). This chain is 1-deoxy-D-xylulose 5-phosphate reductoisomerase, found in Chlamydia pneumoniae (Chlamydophila pneumoniae).